The primary structure comprises 449 residues: Tubulin alpha-1C chain (449 aa).

The short motif at 1-4 (MREC) is the MREC motif element. Gln-11 provides a ligand contact to GTP. Lys-40 is modified (N6-acetyllysine). GTP contacts are provided by Glu-71, Ser-140, Gly-144, Thr-145, Thr-179, Asn-206, and Asn-228. Mg(2+) is bound at residue Glu-71. The active site involves Glu-254. The residue at position 282 (Tyr-282) is a 3'-nitrotyrosine. The tract at residues 429 to 449 (EKDYEEVGADSAEGDDEGDEY) is disordered. Acidic residues predominate over residues 431–449 (DYEEVGADSAEGDDEGDEY). Position 432 is a phosphotyrosine (Tyr-432). Ser-439 is subject to Phosphoserine. Residue Tyr-449 is modified to 3'-nitrotyrosine.

Belongs to the tubulin family. As to quaternary structure, dimer of alpha and beta chains. A typical microtubule is a hollow water-filled tube with an outer diameter of 25 nm and an inner diameter of 15 nM. Alpha-beta heterodimers associate head-to-tail to form protofilaments running lengthwise along the microtubule wall with the beta-tubulin subunit facing the microtubule plus end conferring a structural polarity. Microtubules usually have 13 protofilaments but different protofilament numbers can be found in some organisms and specialized cells. The cofactor is Mg(2+). Post-translationally, some glutamate residues at the C-terminus are polyglycylated, resulting in polyglycine chains on the gamma-carboxyl group. Glycylation is mainly limited to tubulin incorporated into axonemes (cilia and flagella) whereas glutamylation is prevalent in neuronal cells, centrioles, axonemes, and the mitotic spindle. Both modifications can coexist on the same protein on adjacent residues, and lowering polyglycylation levels increases polyglutamylation, and reciprocally. Cilia and flagella glycylation is required for their stability and maintenance. Flagella glycylation controls sperm motility. In terms of processing, some glutamate residues at the C-terminus are polyglutamylated, resulting in polyglutamate chains on the gamma-carboxyl group. Polyglutamylation plays a key role in microtubule severing by spastin (SPAST). SPAST preferentially recognizes and acts on microtubules decorated with short polyglutamate tails: severing activity by SPAST increases as the number of glutamates per tubulin rises from one to eight, but decreases beyond this glutamylation threshold. Glutamylation is also involved in cilia motility. Acetylation of alpha chains at Lys-40 is located inside the microtubule lumen. This modification has been correlated with increased microtubule stability, intracellular transport and ciliary assembly. Post-translationally, methylation of alpha chains at Lys-40 is found in mitotic microtubules and is required for normal mitosis and cytokinesis contributing to genomic stability. In terms of processing, nitration of Tyr-449 is irreversible and interferes with normal dynein intracellular distribution. Undergoes a tyrosination/detyrosination cycle, the cyclic removal and re-addition of a C-terminal tyrosine residue by the enzymes tubulin tyrosine carboxypeptidase (MATCAP1, VASH1 or VASH2) and tubulin tyrosine ligase (TTL), respectively. Post-translationally, tyrosination promotes microtubule interaction with CAP-Gly domain-containing proteins such as CLIP1, CLIP2 and DCTN1. Tyrosination regulates the initiation of dynein-dynactin motility via interaction with DCTN1, which brings the dynein-dynactin complex into contact with microtubules. In neurons, tyrosinated tubulins mediate the initiation of retrograde vesicle transport. In terms of processing, detyrosination is involved in metaphase plate congression by guiding chromosomes during mitosis: detyrosination promotes interaction with CENPE, promoting pole-proximal transport of chromosomes toward the equator. Detyrosination increases microtubules-dependent mechanotransduction in dystrophic cardiac and skeletal muscle. In cardiomyocytes, detyrosinated microtubules are required to resist to contractile compression during contraction: detyrosination promotes association with desmin (DES) at force-generating sarcomeres, leading to buckled microtubules and mechanical resistance to contraction.

Its subcellular location is the cytoplasm. The protein resides in the cytoskeleton. It catalyses the reaction GTP + H2O = GDP + phosphate + H(+). Tubulin is the major constituent of microtubules, a cylinder consisting of laterally associated linear protofilaments composed of alpha- and beta-tubulin heterodimers. Microtubules grow by the addition of GTP-tubulin dimers to the microtubule end, where a stabilizing cap forms. Below the cap, tubulin dimers are in GDP-bound state, owing to GTPase activity of alpha-tubulin. In Bos taurus (Bovine), this protein is Tubulin alpha-1C chain (TUBA1C).